A 309-amino-acid polypeptide reads, in one-letter code: Olfactory receptor 5H17 (309 aa).

The Extracellular segment spans residues 1-28 (MEKKNETLWTEFVLTGLTCLPQWKPLLF). Residue Asn5 is glycosylated (N-linked (GlcNAc...) asparagine). Residues 29 to 49 (LVFLVIYFMTIVGNLGLITLI) form a helical membrane-spanning segment. Over 50–56 (WNDPHLH) the chain is Cytoplasmic. The helical transmembrane segment at 57-77 (IPMYLFLSNLAFVDTWLSSTV) threads the bilayer. Residues 78-93 (TPRMLFNLLDKGKVIS) lie on the Extracellular side of the membrane. Residues 94–114 (VAECKTQFFSFAISVTTECFL) form a helical membrane-spanning segment. A disulfide bridge connects residues Cys97 and Cys189. Over 115–144 (LAAMAYDRYAAICNPLLYPVIMTNRLCVRL) the chain is Cytoplasmic. Residues 145-165 (LALSFIGGFLHAVIHESFLSR) form a helical membrane-spanning segment. Residues 166-198 (LTFCNSNIIYHFYCDVIPLLKISCTDPSLNYLI) are Extracellular-facing. The chain crosses the membrane as a helical span at residues 199–219 (IFIFSGSIQVFTIMTVLISYT). Topologically, residues 220–239 (FVLFTILKKKSDKGIRKAFS) are cytoplasmic. The chain crosses the membrane as a helical span at residues 240–260 (TCGAHLLSVSLYYGPLLFMYV). At 261 to 271 (HPASSEVDDQD) the chain is on the extracellular side. Residues 272-292 (MILSLFYTVIIPVLNPIIYSL) form a helical membrane-spanning segment. Residues 293–309 (RNKQVIDSLKKMLKMMV) are Cytoplasmic-facing.

It belongs to the G-protein coupled receptor 1 family.

The protein resides in the cell membrane. Functionally, potential odorant receptor. The sequence is that of Olfactory receptor 5H17 from Mus musculus (Mouse).